A 642-amino-acid chain; its full sequence is Frizzled-1 (642 aa).

A signal peptide spans 1–68 (MAEEAAPSES…WLLEAPLLLG (68 aa)). 2 disordered regions span residues 26–45 (PGRR…RPRA) and 76–99 (QVSG…QYNG). At 69–317 (VRAQAAGQVS…PEELRFSRTW (249 aa)) the chain is on the extracellular side. One can recognise an FZ domain in the interval 106–225 (PDHGYCQPIS…HGAGELCVGQ (120 aa)). 5 disulfide bridges follow: Cys-111–Cys-172, Cys-119–Cys-165, Cys-156–Cys-193, Cys-182–Cys-222, and Cys-186–Cys-210. Residue Asn-125 is glycosylated (N-linked (GlcNAc...) asparagine). An N-linked (GlcNAc...) asparagine glycan is attached at Asn-226. A helical membrane pass occupies residues 318–338 (IGIWSVLCCASTLFTVLTYLV). The Cytoplasmic portion of the chain corresponds to 339-349 (DMRRFSYPERP). The chain crosses the membrane as a helical span at residues 350–370 (IIFLSGCYTAVAVAYIAGFLL). Topologically, residues 371–397 (EDRVVCNDKFAEDGARTVAQGTKKEGC) are extracellular. Residues 398–418 (TILFMMLYFFSMASSIWWVIL) form a helical membrane-spanning segment. Over 419-440 (SLTWFLAAGMKWGHEAIEANSQ) the chain is Cytoplasmic. A helical membrane pass occupies residues 441-461 (YFHLAAWAVPAIKTITILALG). Topologically, residues 462 to 484 (QVDGDVLSGVCFVGLNNVDALRG) are extracellular. Residues 485-505 (FVLAPLFVYLFIGTSFLLAGF) traverse the membrane as a helical segment. Topologically, residues 506 to 531 (VSLFRIRTIMKHDGTKTEKLEKLMVR) are cytoplasmic. Residues 532-552 (IGVFSVLYTVPATIVIACYFY) form a helical membrane-spanning segment. Topologically, residues 553–593 (EQAFRDQWERSWVAQSCKSYAIPCPHLQGGGGVPPHPPMSP) are extracellular. Residues 594–614 (DFTVFMIKYLMTLIVGITSGF) form a helical membrane-spanning segment. At 615–642 (WIWSGKTLNSWRKFYTRLTNSKQGETTV) the chain is on the cytoplasmic side. The Lys-Thr-X-X-X-Trp motif, mediates interaction with the PDZ domain of Dvl family members motif lies at 620–625 (KTLNSW). Positions 640–642 (TTV) match the PDZ-binding motif.

Belongs to the G-protein coupled receptor Fz/Smo family. As to quaternary structure, interacts with MYOC. Interacts with WNT7B. In terms of processing, ubiquitinated by ZNRF3, leading to its degradation by the proteasome. Expressed in chondrocytes.

Its subcellular location is the cell membrane. Functionally, receptor for Wnt proteins. Activated by WNT7B. Activated by WNT3A, WNT3, WNT1 and to a lesser extent WNT2, but apparently not by WNT4, WNT5A, WNT5B, WNT6, WNT7A or WNT7B. Contradictory results showing activation by WNT7B have been described for mouse. Functions in the canonical Wnt/beta-catenin signaling pathway. The canonical Wnt/beta-catenin signaling pathway leads to the activation of disheveled proteins, inhibition of GSK-3 kinase, nuclear accumulation of beta-catenin and activation of Wnt target genes. A second signaling pathway involving PKC and calcium fluxes has been seen for some family members, but it is not yet clear if it represents a distinct pathway or if it can be integrated in the canonical pathway, as PKC seems to be required for Wnt-mediated inactivation of GSK-3 kinase. Both pathways seem to involve interactions with G-proteins. May be involved in transduction and intercellular transmission of polarity information during tissue morphogenesis and/or in differentiated tissues. The polypeptide is Frizzled-1 (Fzd1) (Mus musculus (Mouse)).